A 2877-amino-acid chain; its full sequence is Desmoplakin (2877 aa).

Positions 1 to 20 (MSCNGGSHPRINTLGRMTRA) are disordered. The interval 1–591 (MSCNGGSHPR…DYMKTIEDLE (591 aa)) is interaction with PKP1, JUP, PKP2. The segment at 1–1063 (MSCNGGSHPR…ANSENCNKNK (1063 aa)) is globular 1. Phosphoserine occurs at positions 22 and 62. Tyr65 is subject to Phosphotyrosine. Position 70 is a phosphothreonine (Thr70). Phosphoserine occurs at positions 174, 175, and 183. Spectrin repeat units lie at residues 185–278 (SGWD…HLRQ) and 279–382 (LQNI…LKEN). A Spectrin 3a repeat occupies 383 to 453 (AAYFQFFEEA…NLVNKSKKIV (71 aa)). The region spanning 465-522 (NKPIILRALCDYKQDQKIVHKGDECILKDNNERSKWYVTGPGGVDMLVPSVGLIIPPP) is the SH3 domain. Residues 523 to 552 (NPLAVDLSCKIEQYYEAILALWNQLYINMK) form a Spectrin 3b repeat. 3 Spectrin repeats span residues 553–634 (SLVS…IQLP), 661–776 (VIET…SLCS), and 777–890 (VRAL…DLEK). 4 coiled-coil regions span residues 1034 to 1280 (LKLK…AEEN), 1313 to 1354 (NARH…YENE), 1395 to 1443 (TSGY…QKAS), and 1473 to 1926 (KQSL…KLED). Residues 1064–1952 (FLDQNLQKYQ…QKEIDKLRQR (889 aa)) form a central fibrous rod domain region. Phosphoserine occurs at positions 1665, 1715, and 2031. The globular 2 stretch occupies residues 1953–2877 (PYGSHRETQT…YSFSSSSIGY (925 aa)). The 4.5 X 38 AA tandem repeats (Domain A) stretch occupies residues 1967–2215 (TVDSSKLVFD…LLLSVQKRSM (249 aa)). 17 Plectin repeats span residues 2016 to 2052 (QPFL…PEST), 2053 to 2090 (VMLL…FDDR), 2091 to 2128 (QQIY…RETG), 2129 to 2166 (MRLL…RDLY), 2170 to 2204 (NDPR…PHTG), 2205 to 2240 (LLLL…PSTV), 2258 to 2295 (KDFL…PGTA), 2296 to 2333 (LELL…IEFK), 2334 to 2371 (EKLL…KGHG), 2372 to 2409 (IRLL…EELS), 2413 to 2447 (SDPS…EETG), 2463 to 2500 (SQKN…YETF), 2514 to 2551 (TITG…RKFF), 2617 to 2654 (SDPL…SITG), 2655 to 2692 (QRLL…QDMA), 2731 to 2768 (QRFL…GRAA), and 2769 to 2806 (QRLQ…DITG). Residues Ser2214, Ser2216, and Ser2232 each carry the phosphoserine modification. The 4.5 X 38 AA tandem repeats (Domain B) stretch occupies residues 2251 to 2453 (DEVGERIKDF…EETGLCLLPL (203 aa)). The LRR 15 repeat unit spans residues 2603–2628 (ISSVRNLTIRSSSLSDPLEESSPIAA). Positions 2616-2828 (LSDPLEESSP…GLPSPYNMSA (213 aa)) are 4.5 X 38 AA tandem repeats (Domain C). A phosphoserine mark is found at Ser2817 and Ser2822. Residues 2817-2877 (SKGLPSPYNM…YSFSSSSIGY (61 aa)) are disordered. A Phosphotyrosine modification is found at Tyr2824. Residues Ser2827 and Ser2831 each carry the phosphoserine modification. The interval 2830–2853 (GSRSGSRSGSRSGSRSGSRSGSRR) is 6 X 4 AA tandem repeats of G-S-R-[SR]. Positions 2830–2853 (GSRSGSRSGSRSGSRSGSRSGSRR) are enriched in low complexity. An omega-N-methylarginine mark is found at Arg2832 and Arg2853. Ser2855 carries the phosphoserine modification. Position 2859 is a phosphothreonine (Thr2859). Residues 2862–2877 (SSYSYSYSFSSSSIGY) are compositionally biased toward low complexity. Ser2874 is subject to Phosphoserine.

The protein belongs to the plakin or cytolinker family. In terms of assembly, homodimer. Interacts with COL17A1 (via cytoplasmic region). Interacts with DSC2. Interacts with PKP1. Interacts with PKP2. Interacts weakly with TMEM65. Post-translationally, phosphorylation at Ser-2855 increases association with intermediate filament cytokeratin, potentially facilitating interaction between desmosome junctions and intermediate filament architecture. As to expression, expressed in cardiomyocytes (at protein level).

It localises to the cell junction. Its subcellular location is the desmosome. The protein resides in the cell membrane. The protein localises to the cytoplasm. Functionally, major high molecular weight protein of desmosomes. Regulates profibrotic gene expression in cardiomyocytes via activation of the MAPK14/p38 MAPK signaling cascade and increase in TGFB1 protein abundance. This chain is Desmoplakin, found in Rattus norvegicus (Rat).